We begin with the raw amino-acid sequence, 212 residues long: Imidazole glycerol phosphate synthase subunit HisH (212 aa).

The Glutamine amidotransferase type-1 domain maps to 1–212; that stretch reads MLAILDYKAG…YEYCKEVSDA (212 aa). Cys79 acts as the Nucleophile in catalysis. Residues His187 and Glu189 contribute to the active site.

In terms of assembly, heterodimer of HisH and HisF.

The protein localises to the cytoplasm. The enzyme catalyses 5-[(5-phospho-1-deoxy-D-ribulos-1-ylimino)methylamino]-1-(5-phospho-beta-D-ribosyl)imidazole-4-carboxamide + L-glutamine = D-erythro-1-(imidazol-4-yl)glycerol 3-phosphate + 5-amino-1-(5-phospho-beta-D-ribosyl)imidazole-4-carboxamide + L-glutamate + H(+). It catalyses the reaction L-glutamine + H2O = L-glutamate + NH4(+). The protein operates within amino-acid biosynthesis; L-histidine biosynthesis; L-histidine from 5-phospho-alpha-D-ribose 1-diphosphate: step 5/9. Functionally, IGPS catalyzes the conversion of PRFAR and glutamine to IGP, AICAR and glutamate. The HisH subunit catalyzes the hydrolysis of glutamine to glutamate and ammonia as part of the synthesis of IGP and AICAR. The resulting ammonia molecule is channeled to the active site of HisF. The polypeptide is Imidazole glycerol phosphate synthase subunit HisH (Maridesulfovibrio salexigens (strain ATCC 14822 / DSM 2638 / NCIMB 8403 / VKM B-1763) (Desulfovibrio salexigens)).